Consider the following 234-residue polypeptide: Probable chemoreceptor glutamine deamidase CheD (234 aa).

It belongs to the CheD family.

The enzyme catalyses L-glutaminyl-[protein] + H2O = L-glutamyl-[protein] + NH4(+). Functionally, probably deamidates glutamine residues to glutamate on methyl-accepting chemotaxis receptors (MCPs), playing an important role in chemotaxis. The sequence is that of Probable chemoreceptor glutamine deamidase CheD from Burkholderia pseudomallei (strain 1710b).